The chain runs to 223 residues: Uracil-DNA glycosylase (223 aa).

Aspartate 61 (proton acceptor) is an active-site residue.

The protein belongs to the uracil-DNA glycosylase (UDG) superfamily. UNG family.

Its subcellular location is the cytoplasm. The enzyme catalyses Hydrolyzes single-stranded DNA or mismatched double-stranded DNA and polynucleotides, releasing free uracil.. Its function is as follows. Excises uracil residues from the DNA which can arise as a result of misincorporation of dUMP residues by DNA polymerase or due to deamination of cytosine. The chain is Uracil-DNA glycosylase from Tolumonas auensis (strain DSM 9187 / NBRC 110442 / TA 4).